The chain runs to 692 residues: Elongation factor G (692 aa).

Residues 8–283 (DKYRNIGIMA…AVVDYMPSPL (276 aa)) form the tr-type G domain. Residues 17–24 (AHIDAGKT), 81–85 (DTPGH), and 135–138 (NKMD) contribute to the GTP site.

It belongs to the TRAFAC class translation factor GTPase superfamily. Classic translation factor GTPase family. EF-G/EF-2 subfamily.

The protein resides in the cytoplasm. Functionally, catalyzes the GTP-dependent ribosomal translocation step during translation elongation. During this step, the ribosome changes from the pre-translocational (PRE) to the post-translocational (POST) state as the newly formed A-site-bound peptidyl-tRNA and P-site-bound deacylated tRNA move to the P and E sites, respectively. Catalyzes the coordinated movement of the two tRNA molecules, the mRNA and conformational changes in the ribosome. The polypeptide is Elongation factor G (Trichlorobacter lovleyi (strain ATCC BAA-1151 / DSM 17278 / SZ) (Geobacter lovleyi)).